The sequence spans 215 residues: Oligoribonuclease (215 aa).

An Exonuclease domain is found at 5–170 (LVWIDCEMTG…ADIHESIREL (166 aa)). The active site involves Y127.

The protein belongs to the oligoribonuclease family.

It localises to the cytoplasm. Functionally, 3'-to-5' exoribonuclease specific for small oligoribonucleotides. This chain is Oligoribonuclease, found in Mycobacterium leprae (strain TN).